We begin with the raw amino-acid sequence, 99 residues long: Large ribosomal subunit protein eL21 (99 aa).

The protein belongs to the eukaryotic ribosomal protein eL21 family.

In Staphylothermus marinus (strain ATCC 43588 / DSM 3639 / JCM 9404 / F1), this protein is Large ribosomal subunit protein eL21.